The following is a 313-amino-acid chain: Cytochrome c biogenesis protein CcsA (313 aa).

The next 8 helical transmembrane spans lie at 9–29 (ILTH…LITF), 44–64 (GIIV…VSSG), 71–91 (LYES…IPYF), 111–131 (GFAT…VPAL), 143–163 (MILG…LLVI), 217–237 (VISL…VWAN), 244–264 (WNWD…AIYL), and 278–298 (AIVA…VNLL).

This sequence belongs to the CcmF/CycK/Ccl1/NrfE/CcsA family. In terms of assembly, may interact with Ccs1.

Its subcellular location is the plastid. The protein resides in the chloroplast thylakoid membrane. Its function is as follows. Required during biogenesis of c-type cytochromes (cytochrome c6 and cytochrome f) at the step of heme attachment. This chain is Cytochrome c biogenesis protein CcsA, found in Solanum lycopersicum (Tomato).